A 1254-amino-acid chain; its full sequence is Protein transport protein Sec31A (1254 aa).

WD repeat units lie at residues 4–47, 64–111, 120–160, 166–206, 209–254, 258–298, and 301–341; these read KEIN…EIFE, SSPH…AGDS, KHTG…SPMT, QPQE…LIIK, DHSN…SPLK, NHTR…VLYE, and TSTQ…NDNA. A compositionally biased stretch (low complexity) spans 364-383; it reads TLPPLQLPQQTSPQSTITPL. A disordered region spans residues 364-386; that stretch reads TLPPLQLPQQTSPQSTITPLKKP. One copy of the WD 8; interaction with SEC13 repeat lies at 397–428; that stretch reads SFAFGGKLVTLDNIKPTAQQPQQTAAHVVHIS. 3 disordered regions span residues 818 to 892, 983 to 1008, and 1058 to 1125; these read PMQT…QSPA, CFQH…GTQH, and PPAP…PGAP. Positions 832 to 846 are enriched in low complexity; sequence AQPAAPAVPPQYYQQ. Polar residues-rich tracts occupy residues 847 to 863 and 872 to 881; these read GRSA…TPTA and VPSSDPQGDS. Residues 1080–1091 show a composition bias toward low complexity; sequence QTLQPQQQVPDQ.

The protein belongs to the WD repeat SEC31 family. In terms of assembly, COPII is composed of at least 5 proteins: the SEC23/24 complex, the SEC13/31 complex and SAR1. SEC13 and SEC31 make a 2:2 tetramer that forms the edge element of the COPII outer coat. The tetramer self-assembles in multiple copies to form the complete polyhedral cage. Interacts (via WD 8) with SEC13.

Its subcellular location is the cytoplasm. It is found in the cytoplasmic vesicle. The protein localises to the COPII-coated vesicle membrane. It localises to the endoplasmic reticulum membrane. In terms of biological role, component of the coat protein complex II (COPII) which promotes the formation of transport vesicles from the endoplasmic reticulum (ER). The coat has two main functions, the physical deformation of the endoplasmic reticulum membrane into vesicles and the selection of cargo molecules. The protein is Protein transport protein Sec31A (sec31a) of Danio rerio (Zebrafish).